The primary structure comprises 320 residues: Cytochrome f (320 aa).

The first 35 residues, 1–35, serve as a signal peptide directing secretion; the sequence is MQTRNTLSWIKEEITRSISVSLMIYIITWASISNA. Positions 36, 56, 59, and 60 each coordinate heme. The helical transmembrane segment at 286–306 threads the bilayer; sequence VQGLLFFLASVVLAQIFLVLK.

It belongs to the cytochrome f family. As to quaternary structure, the 4 large subunits of the cytochrome b6-f complex are cytochrome b6, subunit IV (17 kDa polypeptide, petD), cytochrome f and the Rieske protein, while the 4 small subunits are PetG, PetL, PetM and PetN. The complex functions as a dimer. The cofactor is heme.

The protein localises to the plastid. It is found in the chloroplast thylakoid membrane. Component of the cytochrome b6-f complex, which mediates electron transfer between photosystem II (PSII) and photosystem I (PSI), cyclic electron flow around PSI, and state transitions. This chain is Cytochrome f, found in Carica papaya (Papaya).